The following is a 404-amino-acid chain: MSPSDVPINWKRNLTVTWLGCFLTGAAFSLVMPFLPLYVEQLGVTGHSALNMWSGLVFSITFLFSAIASPFWGGLADRKGRKIMLLRSALGMAIVMLLMGMAQNIWQFLILRALLGLLGGFIPNANALIATQVPRNKSGWALGTLSTGGVSGALLGPLAGGLLADHYGLRPVFFITASVLFICFLLTFFFIRENFQPVSKKEMLHVREVVASLKNPRLVLSLFVTTLIIQVATGSIAPILTLYVRELAGNVSNIAFISGMIASVPGVAALLSAPRLGKLGDRIGPEKILIVALIISVLLLIPMSFVQTPWQLALLRFLLGAADGALLPAVQTLLVYNSTNQIAGRIFSYNQSFRDIGNVTGPLMGAAISASYGFRAVFCVTAGVVLFNAIYSWNSLQRRRLATE.

11 helical membrane passes run 19 to 39 (LGCF…PLYV), 56 to 76 (LVFS…GGLA), 90 to 110 (LGMA…QFLI), 113 to 133 (ALLG…ATQV), 144 to 164 (TLST…GLLA), 171 to 191 (PVFF…FFFI), 222 to 242 (LFVT…ILTL), 254 to 274 (IAFI…LSAP), 288 to 308 (ILIV…FVQT), 317 to 337 (FLLG…LVYN), and 376 to 396 (AVFC…WNSL).

It belongs to the major facilitator superfamily. DHA1 family. MdtG (TC 2.A.1.2.20) subfamily.

The protein localises to the cell inner membrane. The sequence is that of Multidrug resistance protein MdtG from Salmonella arizonae (strain ATCC BAA-731 / CDC346-86 / RSK2980).